We begin with the raw amino-acid sequence, 272 residues long: Dermonecrotic toxin LvSicTox-alphaIC1bi (272 aa).

The active site involves histidine 5. Residues glutamate 25 and aspartate 27 each contribute to the Mg(2+) site. Residue histidine 41 is the Nucleophile of the active site. 2 cysteine pairs are disulfide-bonded: cysteine 45–cysteine 51 and cysteine 47–cysteine 189. Aspartate 84 contacts Mg(2+).

Belongs to the arthropod phospholipase D family. Class II subfamily. The cofactor is Mg(2+). In terms of tissue distribution, expressed by the venom gland.

It localises to the secreted. It carries out the reaction an N-(acyl)-sphingosylphosphocholine = an N-(acyl)-sphingosyl-1,3-cyclic phosphate + choline. It catalyses the reaction an N-(acyl)-sphingosylphosphoethanolamine = an N-(acyl)-sphingosyl-1,3-cyclic phosphate + ethanolamine. The enzyme catalyses a 1-acyl-sn-glycero-3-phosphocholine = a 1-acyl-sn-glycero-2,3-cyclic phosphate + choline. The catalysed reaction is a 1-acyl-sn-glycero-3-phosphoethanolamine = a 1-acyl-sn-glycero-2,3-cyclic phosphate + ethanolamine. Functionally, dermonecrotic toxins cleave the phosphodiester linkage between the phosphate and headgroup of certain phospholipids (sphingolipid and lysolipid substrates), forming an alcohol (often choline) and a cyclic phosphate. This toxin acts on sphingomyelin (SM). It may also act on ceramide phosphoethanolamine (CPE), lysophosphatidylcholine (LPC) and lysophosphatidylethanolamine (LPE), but not on lysophosphatidylserine (LPS), and lysophosphatidylglycerol (LPG). It acts by transphosphatidylation, releasing exclusively cyclic phosphate products as second products. Induces dermonecrosis, hemolysis, increased vascular permeability, edema, inflammatory response, and platelet aggregation. The chain is Dermonecrotic toxin LvSicTox-alphaIC1bi from Loxosceles variegata (Recluse spider).